Here is a 200-residue protein sequence, read N- to C-terminus: MELVMKDAQSLTVSETTFGRDFNEALVHQVVVAYAAGARQGTRAQKTRAEVTGSGKKPWRQKGTGRARSGSIKSPIWRSGGITFAAKPQDHSQKVNKKMYRGALKSILSELVRQDRLIIVEKFAVEAPKTKLLVQKLKDMALEDVMIVTHEVDENLFLAARNLYKVDVRDVTAIDPVSLIAFGKVVMTAEAVKQVEEMLA.

Residues 44-70 (AQKTRAEVTGSGKKPWRQKGTGRARSG) form a disordered region.

This sequence belongs to the universal ribosomal protein uL4 family. Part of the 50S ribosomal subunit.

In terms of biological role, one of the primary rRNA binding proteins, this protein initially binds near the 5'-end of the 23S rRNA. It is important during the early stages of 50S assembly. It makes multiple contacts with different domains of the 23S rRNA in the assembled 50S subunit and ribosome. Protein L4 is a both a transcriptional repressor and a translational repressor protein. It regulates transcription of the S10 operon (to which L4 belongs) by causing premature termination of transcription within the S10 leader. L4 controls the translation of the S10 operon by binding to its mRNA. Its function is as follows. This protein when expressed in E.coli represses both transcription and translation of the endogenous S10 operon. As the M.morganii S10 leader can be regulated in vitro by the E.coli L4 protein this strongly suggests the endogenous protein controls its own S10 operon in a similar fashion. Functionally, forms part of the polypeptide exit tunnel. This Morganella morganii (Proteus morganii) protein is Large ribosomal subunit protein uL4 (rplD).